Here is an 88-residue protein sequence, read N- to C-terminus: EMBRYO SURROUNDING FACTOR 1-like protein 7 (88 aa).

An N-terminal signal peptide occupies residues 1 to 22; sequence MKSSHIALICIVMFSLFALHES. Intrachain disulfides connect Cys-41–Cys-57, Cys-46–Cys-85, Cys-55–Cys-81, and Cys-58–Cys-68.

It belongs to the MEG family. In terms of tissue distribution, expressed in leaves and flowers.

This Arabidopsis thaliana (Mouse-ear cress) protein is EMBRYO SURROUNDING FACTOR 1-like protein 7 (ESFL7).